The chain runs to 1447 residues: DNA-directed RNA polymerase subunit beta' (1447 aa).

Residues Cys70, Cys72, Cys85, and Cys88 each contribute to the Zn(2+) site. 3 residues coordinate Mg(2+): Asp460, Asp462, and Asp464. Residues Cys890, Cys964, Cys971, and Cys974 each contribute to the Zn(2+) site.

This sequence belongs to the RNA polymerase beta' chain family. In terms of assembly, the RNAP catalytic core consists of 2 alpha, 1 beta, 1 beta' and 1 omega subunit. When a sigma factor is associated with the core the holoenzyme is formed, which can initiate transcription. The cofactor is Mg(2+). Requires Zn(2+) as cofactor.

It catalyses the reaction RNA(n) + a ribonucleoside 5'-triphosphate = RNA(n+1) + diphosphate. Functionally, DNA-dependent RNA polymerase catalyzes the transcription of DNA into RNA using the four ribonucleoside triphosphates as substrates. The polypeptide is DNA-directed RNA polymerase subunit beta' (Desulfosudis oleivorans (strain DSM 6200 / JCM 39069 / Hxd3) (Desulfococcus oleovorans)).